A 272-amino-acid polypeptide reads, in one-letter code: 2-succinyl-6-hydroxy-2,4-cyclohexadiene-1-carboxylate synthase (272 aa).

It belongs to the AB hydrolase superfamily. MenH family. Monomer.

The enzyme catalyses 5-enolpyruvoyl-6-hydroxy-2-succinyl-cyclohex-3-ene-1-carboxylate = (1R,6R)-6-hydroxy-2-succinyl-cyclohexa-2,4-diene-1-carboxylate + pyruvate. The protein operates within quinol/quinone metabolism; 1,4-dihydroxy-2-naphthoate biosynthesis; 1,4-dihydroxy-2-naphthoate from chorismate: step 3/7. It functions in the pathway quinol/quinone metabolism; menaquinone biosynthesis. Catalyzes a proton abstraction reaction that results in 2,5-elimination of pyruvate from 2-succinyl-5-enolpyruvyl-6-hydroxy-3-cyclohexene-1-carboxylate (SEPHCHC) and the formation of 2-succinyl-6-hydroxy-2,4-cyclohexadiene-1-carboxylate (SHCHC). The chain is 2-succinyl-6-hydroxy-2,4-cyclohexadiene-1-carboxylate synthase from Yersinia pestis (strain Pestoides F).